The primary structure comprises 341 residues: Glycerol-3-phosphate dehydrogenase [NAD(P)+] (341 aa).

Residues serine 15, tryptophan 16, arginine 36, and lysine 110 each coordinate NADPH. Positions 110, 139, and 141 each coordinate sn-glycerol 3-phosphate. Alanine 143 contacts NADPH. Sn-glycerol 3-phosphate-binding residues include lysine 194, aspartate 247, serine 257, arginine 258, and asparagine 259. Lysine 194 serves as the catalytic Proton acceptor. Arginine 258 provides a ligand contact to NADPH. NADPH-binding residues include valine 282 and glutamate 284.

Belongs to the NAD-dependent glycerol-3-phosphate dehydrogenase family.

It is found in the cytoplasm. It carries out the reaction sn-glycerol 3-phosphate + NAD(+) = dihydroxyacetone phosphate + NADH + H(+). The catalysed reaction is sn-glycerol 3-phosphate + NADP(+) = dihydroxyacetone phosphate + NADPH + H(+). It participates in membrane lipid metabolism; glycerophospholipid metabolism. Its function is as follows. Catalyzes the reduction of the glycolytic intermediate dihydroxyacetone phosphate (DHAP) to sn-glycerol 3-phosphate (G3P), the key precursor for phospholipid synthesis. The protein is Glycerol-3-phosphate dehydrogenase [NAD(P)+] of Xanthomonas campestris pv. campestris (strain 8004).